The chain runs to 114 residues: MAEDTIFSKIIRREIPAAIVYEDDLCLAFKDVNPQAPVHVLLIPKKPLPQLSAATPEDHALLGHLLLKAKEVAADLGIGDQFRLVINNGAEVGQTVFHLHLHILGGRPFSWPPG.

The region spanning 6–114 (IFSKIIRREI…GGRPFSWPPG (109 aa)) is the HIT domain. A Histidine triad motif motif is present at residues 98–102 (HLHLH).

This is an uncharacterized protein from Synechocystis sp. (strain ATCC 27184 / PCC 6803 / Kazusa).